Here is a 926-residue protein sequence, read N- to C-terminus: Ubiquitin carboxyl-terminal hydrolase 4 (926 aa).

The region spanning 205-328 is the Rhodanese domain; the sequence is SQMEILLIDI…WLKSNYGSQV (124 aa). Phosphoserine is present on Ser443. Residues 562-923 form the USP domain; it reads VGLENLGNSC…NAYVLFYHRV (362 aa). The active-site Nucleophile is Cys571. His880 serves as the catalytic Proton acceptor.

This sequence belongs to the peptidase C19 family. In terms of assembly, interacts with BRO1, RFU1 and VPS32. Associates with the 26S proteasome.

The protein localises to the cytoplasm. It is found in the late endosome membrane. The catalysed reaction is Thiol-dependent hydrolysis of ester, thioester, amide, peptide and isopeptide bonds formed by the C-terminal Gly of ubiquitin (a 76-residue protein attached to proteins as an intracellular targeting signal).. With respect to regulation, RFU1 is an inhibitor of deubiquitination activity. In terms of biological role, ubiquitin thioesterase that acts at the late endosome/prevacuolar compartment to recover ubiquitin from ubiquitinated membrane proteins en route to the vacuole. Also removes ubiquitin from soluble proteins targeted to proteasomes. Is essential to maintain a normal level of free ubiquitin. Involved in the ammonium-induced down-regulation of the GAP1 permease and the UME3 destruction in response to oxidative stress. Has a role in the RAD9 checkpoint response to TOP1 poisons. Required for promoting coordination of DNA replication and avoids DNA overreplication. This Saccharomyces cerevisiae (strain YJM789) (Baker's yeast) protein is Ubiquitin carboxyl-terminal hydrolase 4 (DOA4).